Reading from the N-terminus, the 250-residue chain is Adapter protein MecA (250 aa).

This sequence belongs to the MecA family. As to quaternary structure, homodimer.

Its function is as follows. Enables the recognition and targeting of unfolded and aggregated proteins to the ClpC protease or to other proteins involved in proteolysis. This Streptococcus sanguinis (strain SK36) protein is Adapter protein MecA.